The primary structure comprises 362 residues: UDP-N-acetylglucosamine--N-acetylmuramyl-(pentapeptide) pyrophosphoryl-undecaprenol N-acetylglucosamine transferase (362 aa).

UDP-N-acetyl-alpha-D-glucosamine is bound by residues 15–17, N127, R165, S191, I247, 266–271, and Q292; these read TGG and ALTVSE.

Belongs to the glycosyltransferase 28 family. MurG subfamily.

It localises to the cell inner membrane. It catalyses the reaction di-trans,octa-cis-undecaprenyl diphospho-N-acetyl-alpha-D-muramoyl-L-alanyl-D-glutamyl-meso-2,6-diaminopimeloyl-D-alanyl-D-alanine + UDP-N-acetyl-alpha-D-glucosamine = di-trans,octa-cis-undecaprenyl diphospho-[N-acetyl-alpha-D-glucosaminyl-(1-&gt;4)]-N-acetyl-alpha-D-muramoyl-L-alanyl-D-glutamyl-meso-2,6-diaminopimeloyl-D-alanyl-D-alanine + UDP + H(+). It participates in cell wall biogenesis; peptidoglycan biosynthesis. Cell wall formation. Catalyzes the transfer of a GlcNAc subunit on undecaprenyl-pyrophosphoryl-MurNAc-pentapeptide (lipid intermediate I) to form undecaprenyl-pyrophosphoryl-MurNAc-(pentapeptide)GlcNAc (lipid intermediate II). The sequence is that of UDP-N-acetylglucosamine--N-acetylmuramyl-(pentapeptide) pyrophosphoryl-undecaprenol N-acetylglucosamine transferase from Shewanella baltica (strain OS155 / ATCC BAA-1091).